The primary structure comprises 242 residues: Terpene cyclase dpfgB (242 aa).

7 consecutive transmembrane segments (helical) span residues Asp-15–Gly-37, Ala-51–Phe-71, Leu-75–Val-95, Leu-112–Ala-132, Ala-141–Cys-161, Ser-169–Leu-189, and Leu-205–Trp-225.

Belongs to the paxB family.

The protein localises to the membrane. Its pathway is secondary metabolite biosynthesis; terpenoid biosynthesis. In terms of biological role, terpene cyclase; part of the gene cluster that mediates the biosynthesis of diterpenoid pyrones. The first step of the pathway is the synthesis of the alpha-pyrone moiety by the polyketide synthase dpfgA via condensation of one acetyl-CoA starter unit with 3 malonyl-CoA units and 2 methylations. The alpha-pyrone is then combined with geranylgeranyl pyrophosphate (GGPP) formed by the GGPP synthase dpfgD through the action of the prenyltransferase dpfgC to yield a linear alpha-pyrone diterpenoid. Subsequent steps in the diterpenoid pyrone biosynthetic pathway involve the decalin core formation, which is initiated by the epoxidation of the C10-C11 olefin by the FAD-dependent oxidoreductase dpfgE, and is followed by a cyclization cascade catalyzed by the terpene cyclase dpfgB. The short chain dehydrogenase/reductase dpfgG then oxidizes the 8S hydroxy group to a ketone and the short chain dehydrogenase/reductase dpfgH reduces the ketone to the 8R hydroxy group to yield higginsianin B. Higginsianin B is further methylated by the methyltransferase dpfgI to produce the intermediate named FDDP B. The cytochrome P450 monooxygenase dfgpJ then catalyzes a three-step oxidation at C-27 to generate a carboxylic acid as well as C-26 hydroxylation. Finally, methyltransferase dpfgK methylates the carboxylic acid generated by dpfgJ, yielding the final diterpenoid pyrones from the pathway which were named FDDP D and FDDP E. The protein is Terpene cyclase dpfgB of Gibberella zeae (strain ATCC MYA-4620 / CBS 123657 / FGSC 9075 / NRRL 31084 / PH-1) (Wheat head blight fungus).